The following is a 438-amino-acid chain: Ribosomal protein uS12 methylthiotransferase RimO (438 aa).

Residues 5–116 (PTIAISHLGC…IVQVIQRVEN (112 aa)) form the MTTase N-terminal domain. Cys14, Cys50, Cys79, Cys154, Cys158, and Cys161 together coordinate [4Fe-4S] cluster. One can recognise a Radical SAM core domain in the interval 140 to 369 (TTSEGVAYLR…MQIQQPISLQ (230 aa)). Positions 372–438 (CACIGDIVDV…IYDLYGEVIN (67 aa)) constitute a TRAM domain.

Belongs to the methylthiotransferase family. RimO subfamily. [4Fe-4S] cluster is required as a cofactor.

The protein localises to the cytoplasm. It catalyses the reaction L-aspartate(89)-[ribosomal protein uS12]-hydrogen + (sulfur carrier)-SH + AH2 + 2 S-adenosyl-L-methionine = 3-methylsulfanyl-L-aspartate(89)-[ribosomal protein uS12]-hydrogen + (sulfur carrier)-H + 5'-deoxyadenosine + L-methionine + A + S-adenosyl-L-homocysteine + 2 H(+). Its function is as follows. Catalyzes the methylthiolation of an aspartic acid residue of ribosomal protein uS12. In Gloeothece citriformis (strain PCC 7424) (Cyanothece sp. (strain PCC 7424)), this protein is Ribosomal protein uS12 methylthiotransferase RimO.